The sequence spans 666 residues: MGQTKSKIKSKYASYLSFIKILLKRGGVKVSTKNLIKLFQIIEQFCPWFPEQGTSDLKDWKRIGKELKQAGRKGNIIPLTVWNDWAIIKAALEPFQTEEDSISVSDAPGSCLIDCNENTRKKSQKETESLHCEYVAEPVMAQSTQNVDYNQLQEVIYPETLKLEGKGPELMGPSESKPRGTSPLPAGQVLVRLQPQKQVKENKTQPQVAYQYWPLAELQYRPPPESQYGYPGMPPAPQGRAPYHQPPTRRLNPMAPPSRQGSELHEIIDKSRKEGDTEAWQFPVTLEPMPPGEGAQEGEPPTVEARYKSFSIKMLKDMKEGVKQYGPNSPYMRTLLDSIAYGHRLIPYDWEILAKSSLSPSQFLQFKTWWIDGVQEQVRRNRAANPPVNIDADQLLGIGQNWSTISQQALMQNEAIEQVRAICLRAWEKIQDPGSTCPSFNTVRQGSKEPYPDFVARLQDVAQKSIADEKAGKVIVELMAYENANPECQSAIKPLKGKVPAGSDVISEYVKACDGIGGAMHKAMLMAQAITGVVLGGQVRTFGGKCYNCGQIGHLKKNCPVLNKQNITIQATTTGREPPDLCPRCKKGKHWASQCRSKFDKNGQPLSGNEQRGQPQAPQQTGAFPIQPFVPQGFQGQQPPLSQVFQGISQLPQYNNCPSPQAAVQQ.

A lipid anchor (N-myristoyl glycine) is attached at G2. Positions 164–183 (EGKGPELMGPSESKPRGTSP) are disordered. CCHC-type zinc fingers lie at residues 544-561 (GKCY…NCPV) and 580-597 (DLCP…QCRS). The disordered stretch occupies residues 598–642 (KFDKNGQPLSGNEQRGQPQAPQQTGAFPIQPFVPQGFQGQQPPLS). The segment covering 604–622 (QPLSGNEQRGQPQAPQQTG) has biased composition (polar residues). Low complexity predominate over residues 624–640 (FPIQPFVPQGFQGQQPP).

The protein belongs to the beta type-B retroviral Gag protein family. HERV class-II K(HML-2) gag subfamily. Myristoylation is essential for retroviral assembly. Alteration of the glycine residue leads to a block in the budding of particles and an accumulation of Gag inside the cell. In terms of processing, specific enzymatic cleavages may yield mature proteins.

The protein localises to the cell membrane. Functionally, the products of the Gag polyproteins of infectious retroviruses perform highly complex orchestrated tasks during the assembly, budding, maturation, and infection stages of the viral replication cycle. During viral assembly, the proteins form membrane associations and self-associations that ultimately result in budding of an immature virion from the infected cell. Gag precursors also function during viral assembly to selectively bind and package two plus strands of genomic RNA. Endogenous Gag proteins may have kept, lost or modified their original function during evolution. This chain is Endogenous retrovirus group K member 10 Gag polyprotein (ERVK-10), found in Homo sapiens (Human).